Here is a 397-residue protein sequence, read N- to C-terminus: MALKKPGSLTIAGSGIASIGHITLETLALIKEADKIFYAVTDPATECYIQENSRGDHFDLTTFYDTNKKRYESYVQMSEVMLRDVRAGRNVLGIFYGHPGVFVAPSHRAIAIAREEGFQAKMLPGISAEDYMFADLGFDPSTYGCMTQEATELLVRNKKLDPSIHNIIWQVGSVGVDTMVFDNGKFHLLVERLEKDFGLDHKIQHYIGAILPQSVTVKDTFAIRDLRKEEVLKQFTTTSTFYVPPRTPAPIDPKAVQALGLPATVTKGAQDWTGFQSVSPAYGPDEMRAVAALDSFVPSQEKAVVHASRAMQSLMVDLALRPALLEQYKADPVAFANTRNGLTAQEKFALGLKKPGPIFVVMRQLPSAIASGQEPSQEEIARADDATAFIIIYIVQG.

Residues Met1–Arg246 form a methyltransferase domain region. Active-site residues include Arg70, Tyr74, and Tyr96. 8 residues coordinate S-adenosyl-L-methionine: Tyr96, His98, Val101, Ala128, Gln170, Gly208, Ser239, and Thr240. Residues Thr247–Leu365 form a clasp domain region. The segment at Pro366–Ala388 is precursor leader. Residues Ile391 and Ile392 each carry the N-methylisoleucine modification. Tyr393 bears the N-methyltyrosine mark. The residue at position 394 (Ile394) is an N-methylisoleucine. Val395 is subject to N-methylvaline.

In the N-terminal section; belongs to the precorrin methyltransferase family. In terms of assembly, homodimer. In terms of processing, mroMA automethylates at Ile-391, Ile-392, Tyr-393, Ile-394 and Val-395 before being processed by the a prolyloligopeptidase which likely forms a peptidyl ester upon removal of the follower propeptide, which then undergoes macrocyclization with the N-terminus of the modified core peptide. Peptide backbone alpha-N-methylations change the physicochemical properties of amide bonds to provide structural constraints and other favorable characteristics including biological membrane permeability to peptides.

Its pathway is secondary metabolite biosynthesis. Its function is as follows. Fusion protein of the methyltransferase mroM1 and a type I borosin core peptide; part of the gene cluster that mediates the biosynthesis of a type I borosin, a highly methylated cyclic peptide with potent biological activities. Type I borosins derive from the C-terminus of the fusion protein, and it is the same protein that methylates its own C-terminus using S-adenosyl methionine (SAM). The C-terminus is subsequently cleaved off and macrocyclized by a prolyloligopeptidase to give the final product. The sequence is that of Methyltransferase/ribosomally synthesized type I borosin cyclic peptide precursor mroMa1 from Mycena rosella (Pink bonnet).